We begin with the raw amino-acid sequence, 208 residues long: GTP-binding protein YPTM1 (208 aa).

GTP contacts are provided by residues 15–23 (GDSSVGKSC), 33–40 (YVDSYIST), 63–67 (DTAGQ), 121–124 (NKCD), and 151–153 (SAK). Residues 37 to 45 (YISTIGVDF) carry the Effector region motif. The tract at residues 189–208 (QMKGRPIQQEQQKSSRCCST) is disordered. Polar residues predominate over residues 196–208 (QQEQQKSSRCCST). Residues cysteine 205 and cysteine 206 are each lipidated (S-geranylgeranyl cysteine).

The protein belongs to the small GTPase superfamily. Rab family. As to expression, low levels in coleoptiles.

It is found in the cell membrane. Protein transport. Probably involved in vesicular traffic. The sequence is that of GTP-binding protein YPTM1 (YPTM1) from Zea mays (Maize).